The following is a 315-amino-acid chain: Petrobactin import system permease protein YclO (315 aa).

Helical transmembrane passes span 7–27 (IALLVGLAIVCIGLFLFYDLG), 40–60 (VAAIVLTGGAIAFSTMIFQTI), 76–96 (LYMLIQTGIIFLFGSANMVIM), 100–120 (INFIISVLLMILFSLVLYQIM), 128–148 (IFFLLLIGIVFGTLFSSLSSF), 172–192 (INTDLLWLAFIIFLLTGVYVW), 223–243 (LIVVAILVSVSTALVGPIMFL), 262–282 (YLIAGSVFISIIALVGGQFVV), and 288–308 (FSTTLSVIINFAGGIYFIYLL).

It belongs to the binding-protein-dependent transport system permease family. FecCD subfamily. In terms of assembly, the complex is composed of two ATP-binding proteins (YclP), two transmembrane proteins (YclN and YclO) and a solute-binding protein (YclQ).

The protein localises to the cell membrane. Functionally, part of the ABC transporter complex YclNOPQ involved in uptake of ferric-petrobactin. Petrobactin is a photoreactive 3,4-catecholate siderophore produced by many members of the B.cereus group, including B.anthracis. Probably responsible for the translocation of the substrate across the membrane. This Bacillus subtilis (strain 168) protein is Petrobactin import system permease protein YclO (yclO).